The chain runs to 389 residues: Flagellar P-ring protein (389 aa).

A signal peptide spans 1 to 33; it reads MRPLVAARRRAAACCALAACMLALAFAPAAARA.

The protein belongs to the FlgI family. The basal body constitutes a major portion of the flagellar organelle and consists of four rings (L,P,S, and M) mounted on a central rod.

It localises to the periplasm. The protein resides in the bacterial flagellum basal body. Assembles around the rod to form the L-ring and probably protects the motor/basal body from shearing forces during rotation. The sequence is that of Flagellar P-ring protein from Burkholderia mallei (strain ATCC 23344).